A 182-amino-acid chain; its full sequence is Probable peptidyl-prolyl cis-trans isomerase A (182 aa).

The 169-residue stretch at 13-181 (QNATATLHTN…EPVVIDSITI (169 aa)) folds into the PPIase cyclophilin-type domain. A disordered region spans residues 161–182 (TTATDGNDRPTEPVVIDSITIS).

It belongs to the cyclophilin-type PPIase family.

Its subcellular location is the cytoplasm. The enzyme catalyses [protein]-peptidylproline (omega=180) = [protein]-peptidylproline (omega=0). Its function is as follows. PPIases accelerate the folding of proteins. It catalyzes the cis-trans isomerization of proline imidic peptide bonds in oligopeptides. This Mycobacterium leprae (strain TN) protein is Probable peptidyl-prolyl cis-trans isomerase A (ppiA).